The primary structure comprises 202 residues: MYEYLHGLITAVYPDHVVVDVNGVGYLVNTANPYRYEVSATAVTIYVYQAVSDTAQTLYGFSDFAEKQLFLKLINVNGIGPKSALAILANPDHQGLMMAIKTNDTGFLTKFPGVGKKTAGQIVLDLQNKLDDLAPATDDNTLFTPEVAPTTTENPQLADALAALTALGYRETAVKKITAQLRQFNGQTTNDYLSEGLRLLTK.

The domain I stretch occupies residues 1–62 (MYEYLHGLIT…DTAQTLYGFS (62 aa)). Residues 63–141 (DFAEKQLFLK…DLAPATDDNT (79 aa)) form a domain II region. Residues 142–151 (LFTPEVAPTT) are flexible linker. Positions 152 to 202 (TENPQLADALAALTALGYRETAVKKITAQLRQFNGQTTNDYLSEGLRLLTK) are domain III.

The protein belongs to the RuvA family. In terms of assembly, homotetramer. Forms an RuvA(8)-RuvB(12)-Holliday junction (HJ) complex. HJ DNA is sandwiched between 2 RuvA tetramers; dsDNA enters through RuvA and exits via RuvB. An RuvB hexamer assembles on each DNA strand where it exits the tetramer. Each RuvB hexamer is contacted by two RuvA subunits (via domain III) on 2 adjacent RuvB subunits; this complex drives branch migration. In the full resolvosome a probable DNA-RuvA(4)-RuvB(12)-RuvC(2) complex forms which resolves the HJ.

The protein localises to the cytoplasm. In terms of biological role, the RuvA-RuvB-RuvC complex processes Holliday junction (HJ) DNA during genetic recombination and DNA repair, while the RuvA-RuvB complex plays an important role in the rescue of blocked DNA replication forks via replication fork reversal (RFR). RuvA specifically binds to HJ cruciform DNA, conferring on it an open structure. The RuvB hexamer acts as an ATP-dependent pump, pulling dsDNA into and through the RuvAB complex. HJ branch migration allows RuvC to scan DNA until it finds its consensus sequence, where it cleaves and resolves the cruciform DNA. The protein is Holliday junction branch migration complex subunit RuvA of Levilactobacillus brevis (strain ATCC 367 / BCRC 12310 / CIP 105137 / JCM 1170 / LMG 11437 / NCIMB 947 / NCTC 947) (Lactobacillus brevis).